We begin with the raw amino-acid sequence, 477 residues long: Glutamate--tRNA ligase 2 (477 aa).

The 'HIGH' region signature appears at 9-19 (PSPTGFLHIGG). The short motif at 238 to 242 (KLSKR) is the 'KMSKS' region element. Lys241 is a binding site for ATP.

Belongs to the class-I aminoacyl-tRNA synthetase family. Glutamate--tRNA ligase type 1 subfamily. In terms of assembly, monomer.

Its subcellular location is the cytoplasm. The enzyme catalyses tRNA(Glu) + L-glutamate + ATP = L-glutamyl-tRNA(Glu) + AMP + diphosphate. Its function is as follows. Catalyzes the attachment of glutamate to tRNA(Glu) in a two-step reaction: glutamate is first activated by ATP to form Glu-AMP and then transferred to the acceptor end of tRNA(Glu). The chain is Glutamate--tRNA ligase 2 from Paramagnetospirillum magneticum (strain ATCC 700264 / AMB-1) (Magnetospirillum magneticum).